Reading from the N-terminus, the 361-residue chain is Diacylglycerol O-acyltransferase 2 (361 aa).

Over 1–42 (MKTLIAAYSGVLRGTGSSILSALQDLFSVTWLNRAKVEKQLQ) the chain is Cytoplasmic. Residues 43–61 (VISVLQWVLSFLVLGVACS) traverse the membrane as a helical segment. Residues 62–65 (VILM) lie on the Lumenal side of the membrane. A helical membrane pass occupies residues 66–85 (YTFCTDCWLIAVLYFTWLVF). Topologically, residues 86-361 (DWNTPKKGGR…LPETEVLEVN (276 aa)) are cytoplasmic.

The protein belongs to the diacylglycerol acyltransferase family. As to quaternary structure, forms multimeric complexes consisting of several DGAT2 subunits. Interacts with SLC27A1 and this interaction is enhanced in the presence of ZFYVE1.

Its subcellular location is the endoplasmic reticulum membrane. The protein localises to the lipid droplet. It localises to the cytoplasm. The protein resides in the perinuclear region. The enzyme catalyses an acyl-CoA + a 1,2-diacyl-sn-glycerol = a triacyl-sn-glycerol + CoA. The catalysed reaction is all-trans-retinol + an acyl-CoA = an all-trans-retinyl ester + CoA. It catalyses the reaction 2-(9Z-octadecenoyl)-glycerol + (9Z)-octadecenoyl-CoA = 1,2-di-(9Z-octadecenoyl)-sn-glycerol + CoA. It carries out the reaction 1,2-di-(9Z-octadecenoyl)-sn-glycerol + (9Z)-octadecenoyl-CoA = 1,2,3-tri-(9Z-octadecenoyl)-glycerol + CoA. The enzyme catalyses all-trans-retinol + hexadecanoyl-CoA = all-trans-retinyl hexadecanoate + CoA. The catalysed reaction is 1-O-(9Z-octadecenyl)-glycerol + (9Z)-octadecenoyl-CoA = 1-O-(9Z-octadecyl)-3-(9Z-octadecenoyl)-glycerol + CoA. It catalyses the reaction 1-(9Z-octadecenoyl)-glycerol + (9Z)-octadecenoyl-CoA = 1,2-di-(9Z-octadecenoyl)-glycerol + CoA. It carries out the reaction 1,2-di-(9Z-octadecenoyl)-sn-glycerol + hexadecanoyl-CoA = 1,2-di-(9Z)-octadecenoyl-3-hexadecanoyl-sn-glycerol + CoA. The enzyme catalyses 1,3-di-(9Z-octadecenoyl)-glycerol + (9Z)-octadecenoyl-CoA = 1,2,3-tri-(9Z-octadecenoyl)-glycerol + CoA. The catalysed reaction is 2,3-di-(9Z)-octadecenoyl-sn-glycerol + (9Z)-octadecenoyl-CoA = 1,2,3-tri-(9Z-octadecenoyl)-glycerol + CoA. It catalyses the reaction 2-(9Z-octadecenoyl)-glycerol + hexadecanoyl-CoA = 1-hexadecanoyl-2-(9Z-octadecenoyl)-sn-glycerol + CoA. The protein operates within glycerolipid metabolism; triacylglycerol biosynthesis. With respect to regulation, inhibited by niacin. Essential acyltransferase that catalyzes the terminal and only committed step in triacylglycerol synthesis by using diacylglycerol and fatty acyl CoA as substrates. Required for synthesis and storage of intracellular triglycerides. Probably plays a central role in cytosolic lipid accumulation. In liver, is primarily responsible for incorporating endogenously synthesized fatty acids into triglycerides. Also functions as an acyl-CoA retinol acyltransferase (ARAT). Also able to use 1-monoalkylglycerol (1-MAkG) as an acyl acceptor for the synthesis of monoalkyl-monoacylglycerol (MAMAG). In Bos taurus (Bovine), this protein is Diacylglycerol O-acyltransferase 2 (DGAT2).